The following is a 372-amino-acid chain: MAGVRLVDVWKVFGEVTAVREMSLEVKDGEFMILLGPSGCGKTTTLRMIAGLEEPSRGQIYIGDKLVADPEKGIFVPPKDRDIAMVFQSYALYPHMTVYDNIAFPLKLRKVPRQEIDQRVREVAELLGLTELLNRKPRELSGGQRQRVALGRAIVRKPQVFLMDEPLSNLDAKLRVRMRAELKKLQRQLGVTTIYVTHDQVEAMTMGDRIAVMNRGVLQQVGSPDEVYDKPANTFVAGFIGSPPMNFLDAIVTEDGFVDFGEFRLKLLPDQFEVLGELGYVGREVIFGIRPEDLYDAMFAQVRVPGENLVRAVVEIVENLGSERIVHLRVGGVTFVGSFRSESRVREGVEVDVVFDMKKIHIFDKTTGKAIF.

One can recognise an ABC transporter domain in the interval 4–240; it reads VRLVDVWKVF…PANTFVAGFI (237 aa). 36–43 provides a ligand contact to ATP; the sequence is GPSGCGKT.

This sequence belongs to the ABC transporter superfamily. Maltose/trehalose importer (TC 3.A.1.1.7) family. As to quaternary structure, homodimer. The complex is composed of two ATP-binding proteins (MalK), two transmembrane proteins (MalG and MalF) and a solute-binding protein (MalE).

It localises to the cell membrane. The enzyme catalyses D-maltose(out) + ATP + H2O = D-maltose(in) + ADP + phosphate + H(+). With respect to regulation, inhibited by N-ethylmaleimide but not by vanadate. Part of the ABC transporter complex MalEFGK involved in trehalose/maltose import. Responsible for energy coupling to the transport system. The sequence is that of Trehalose/maltose import ATP-binding protein MalK (malK) from Thermococcus litoralis (strain ATCC 51850 / DSM 5473 / JCM 8560 / NS-C).